Reading from the N-terminus, the 1318-residue chain is Putative tetratricopeptide repeat protein 41 (1318 aa).

TPR repeat units lie at residues 399–432 (TQLETDILNEDSDGLVFSFLVEVFIASISLKPCI), 653–684 (WVQEKPNGLLYFWHQSLSAVEHKLLGVITPVE), 817–850 (CRLMFFIGSFLKFMGKTNEAEELFLSVEDMLVQS), 858–891 (LKVQNAIGELYLETGMTQEGFQYFQKAWSSMLRL), 991–1027 (MEFLADLLFFPQRDSKKSQRKQVLKYYKQVIKIKENA), and 1045–1082 (SDTLCKLAGHLLASDSCHHVMIEAVGYLYRSVDLRVIH).

It localises to the cytoplasm. The protein is Putative tetratricopeptide repeat protein 41 of Homo sapiens (Human).